We begin with the raw amino-acid sequence, 286 residues long: ATP synthase gamma chain (286 aa).

This sequence belongs to the ATPase gamma chain family. F-type ATPases have 2 components, CF(1) - the catalytic core - and CF(0) - the membrane proton channel. CF(1) has five subunits: alpha(3), beta(3), gamma(1), delta(1), epsilon(1). CF(0) has three main subunits: a, b and c.

It is found in the cell membrane. Its function is as follows. Produces ATP from ADP in the presence of a proton gradient across the membrane. The gamma chain is believed to be important in regulating ATPase activity and the flow of protons through the CF(0) complex. This chain is ATP synthase gamma chain, found in Bacillus anthracis (strain A0248).